A 273-amino-acid polypeptide reads, in one-letter code: Type II methyltransferase M2.MboI (273 aa).

This sequence belongs to the N(4)/N(6)-methyltransferase family.

It carries out the reaction a 2'-deoxyadenosine in DNA + S-adenosyl-L-methionine = an N(6)-methyl-2'-deoxyadenosine in DNA + S-adenosyl-L-homocysteine + H(+). In terms of biological role, a beta subtype methylase that recognizes the double-stranded sequence 5'-GATC-3', methylates A-2 on both strands, and protects the DNA from cleavage by the MboI endonuclease. This seems to be a weaker methylase than M1.MboI. The sequence is that of Type II methyltransferase M2.MboI (mboIBM) from Moraxella bovis.